The following is a 311-amino-acid chain: JNK1/MAPK8-associated membrane protein (311 aa).

The Lumenal portion of the chain corresponds to 1 to 57 (MAVDIQPACLGLYCGKTLLFKNGSTEIYGECGVCPRGQRTNAQKYCQPCTESPELYD). A glycan (N-linked (GlcNAc...) asparagine) is linked at N22. A helical transmembrane segment spans residues 58–78 (WLYLGFMAMLPLVLHWFFIEW). Residues 79 to 87 (YSGKKSSSA) are Cytoplasmic-facing. The helical transmembrane segment at 88-108 (LFQHITALFECSMAAIITLLV) threads the bilayer. The Lumenal portion of the chain corresponds to 109–149 (SDPVGVLYIRSCRVLMLSDWYTMLYNPSPDYVTTVHCTHEA). Residues 150 to 170 (VYPLYTIVFIYYAFCLVLMML) traverse the membrane as a helical segment. Residues 171-188 (LRPLLVKKIACGLGKSDR) are Cytoplasmic-facing. A helical membrane pass occupies residues 189–209 (FKSIYAALYFFPILTVLQAVG). Position 210 (G210) is a topological domain, lumenal. A helical transmembrane segment spans residues 211–231 (GLLYYAFPYIILVLSLVTLAV). Topologically, residues 232-250 (YMSASEIENCYDLLVRKKR) are cytoplasmic. Residues 251–271 (LIVLFSHWLLHAYGIISISRV) traverse the membrane as a helical segment. The Lumenal portion of the chain corresponds to 272 to 277 (DKLEQD). A helical membrane pass occupies residues 278-298 (LPLLALVPTPALFYLFTAKFT). Over 299–311 (EPSRILSEGANGH) the chain is Cytoplasmic.

Interacts with RNF5 and MAPK8, but not with MAPK9. Binding to MAPK8 occurs before and after exposure to stress, such as UV irradiation. After exposure to stress, interacts with phosphorylated MAPK8. Competes with DUSP10 for MAPK8 binding. Associates with multiple components of the proteasome and with ERAD regulatory proteins including AMFR/GP78, CANX, PSMC1, PSMC2, PSMC3/TBP1, PSMC5, PSMC6, PSMD8, SEC61-ALPHA and UFD1. Interacts with DERL1 (in the presence of misfolded protein CFTR(F508del)). Ubiquitinated by RNF5 via 'Lys-63'-linked ubiquitin linkage in a UBE2N-dependent manner. Ubiquitination decreases association with components of the proteasome and ERAD.

Its subcellular location is the endoplasmic reticulum membrane. In terms of biological role, regulates the duration of MAPK8 activity in response to various stress stimuli. Facilitates degradation of misfolded endoplasmic reticulum (ER) proteins through the recruitment of components of the proteasome and endoplasmic reticulum-associated degradation (ERAD) system. The sequence is that of JNK1/MAPK8-associated membrane protein (JKAMP) from Homo sapiens (Human).